The sequence spans 319 residues: Beta-ketoacyl-[acyl-carrier-protein] synthase III (319 aa).

Residues C112 and H246 contribute to the active site. The tract at residues 247–251 (QANFR) is ACP-binding. Residue N276 is part of the active site.

It belongs to the thiolase-like superfamily. FabH family. Homodimer.

The protein localises to the cytoplasm. The catalysed reaction is malonyl-[ACP] + acetyl-CoA + H(+) = 3-oxobutanoyl-[ACP] + CO2 + CoA. It functions in the pathway lipid metabolism; fatty acid biosynthesis. Its function is as follows. Catalyzes the condensation reaction of fatty acid synthesis by the addition to an acyl acceptor of two carbons from malonyl-ACP. Catalyzes the first condensation reaction which initiates fatty acid synthesis and may therefore play a role in governing the total rate of fatty acid production. Possesses both acetoacetyl-ACP synthase and acetyl transacylase activities. Its substrate specificity determines the biosynthesis of branched-chain and/or straight-chain of fatty acids. The chain is Beta-ketoacyl-[acyl-carrier-protein] synthase III from Pseudoalteromonas atlantica (strain T6c / ATCC BAA-1087).